The chain runs to 85 residues: Conotoxin Lt28.7 (85 aa).

The N-terminal stretch at 1–21 (MPKLEMMLLVLLILPLCYIDA) is a signal peptide. Positions 22–40 (VGPPPPWNMEDEIIEHWQE) are excised as a propeptide.

It belongs to the conotoxin D superfamily. Contains 5 disulfide bonds. Expressed by the venom duct.

Its subcellular location is the secreted. In terms of biological role, probable neurotoxin. This chain is Conotoxin Lt28.7, found in Conus litteratus (Lettered cone).